Consider the following 219-residue polypeptide: Ribosomal RNA large subunit methyltransferase E (219 aa).

5 residues coordinate S-adenosyl-L-methionine: glycine 60, tryptophan 62, aspartate 80, aspartate 96, and aspartate 120. Lysine 160 acts as the Proton acceptor in catalysis.

The protein belongs to the class I-like SAM-binding methyltransferase superfamily. RNA methyltransferase RlmE family.

It is found in the cytoplasm. The catalysed reaction is uridine(2552) in 23S rRNA + S-adenosyl-L-methionine = 2'-O-methyluridine(2552) in 23S rRNA + S-adenosyl-L-homocysteine + H(+). Specifically methylates the uridine in position 2552 of 23S rRNA at the 2'-O position of the ribose in the fully assembled 50S ribosomal subunit. This is Ribosomal RNA large subunit methyltransferase E from Acidithiobacillus ferrooxidans (strain ATCC 23270 / DSM 14882 / CIP 104768 / NCIMB 8455) (Ferrobacillus ferrooxidans (strain ATCC 23270)).